We begin with the raw amino-acid sequence, 291 residues long: m-AAA protease-interacting protein 1, mitochondrial (291 aa).

The transit peptide at 1–96 (MALAVRLLPR…TFPSCPRRTY (96 aa)) directs the protein to the mitochondrion.

Interacts with AFG3L2. Interacts with SPG7. Interacts with SMDT1/EMRE (via the N-terminal transit peptide); interaction is direct and takes place before maturation of SMDT1/EMRE.

It localises to the mitochondrion matrix. In terms of biological role, promotes sorting of SMDT1/EMRE in mitochondria by ensuring its maturation. Interacts with the transit peptide region of SMDT1/EMRE precursor protein in the mitochondrial matrix, leading to protect it against protein degradation by YME1L1, thereby ensuring SMDT1/EMRE maturation by the mitochondrial processing peptidase (PMPCA and PMPCB). The polypeptide is m-AAA protease-interacting protein 1, mitochondrial (Bos taurus (Bovine)).